The sequence spans 344 residues: MSEASLSTYYTTIYPTKCPPDPRFLVSKEGLAFCCQIIGFISLPMHFFTGYCILMKTPATMKHVKLSLVNLNIWYIISQVIVSFFITSYNFYPSLASFSVGYATALNFPTVVQICILYTINDAVHVSITLLFEIRSSLILKNRFRISSSRGRGYWLAGNFFGTVFITSPVFFNLADQNAEKMKILEAIPCPSKEFFLEPITVFATSGAWNTYLLISRSLKSIYMLQIIFFTSCCIYYLVIVKTDQVSAQTRRIQARSFYGLIIQTLIPAAFTLIPSVLISSRSAPDQLVNNLVSISYAVHIVVGSLAILLVHHPYRLFIKSIFVKSKESVIVPVVSTSMFKVIK.

The next 7 membrane-spanning stretches (helical) occupy residues 30 to 50, 66 to 86, 110 to 132, 155 to 175, 221 to 241, 259 to 279, and 292 to 312; these read GLAF…FFTG, LSLV…SFFI, TVVQ…TLLF, WLAG…FNLA, SIYM…LVIV, YGLI…SVLI, and LVSI…LLVH.

Belongs to the nematode receptor-like protein srh family.

Its subcellular location is the membrane. This Caenorhabditis elegans protein is Serpentine receptor class H-72 (srh-72).